The primary structure comprises 383 residues: 3-phytase (383 aa).

An N-terminal signal peptide occupies residues 1 to 26 (MNHSKTLLLTAAAGLMLTCGAVSSQA). A propeptide spanning residues 27 to 29 (KHK) is cleaved from the precursor. The region spanning 30–362 (LSDPYHFTVN…VPWERIADQI (333 aa)) is the BPP domain.

Requires Ca(2+) as cofactor.

The protein localises to the secreted. The catalysed reaction is 1D-myo-inositol hexakisphosphate + H2O = 1D-myo-inositol 1,2,4,5,6-pentakisphosphate + phosphate. Catalyzes the hydrolysis of inorganic orthophosphate from phytate. Only phytate, ADP, and ATP were hydrolyzed (100, 75, and 50% of the relative activity, respectively). This Bacillus subtilis protein is 3-phytase (phyC).